The sequence spans 126 residues: Acidic phospholipase A2 3 (126 aa).

A propeptide spanning residues 1-7 (SNRPMPL) is cleaved from the precursor. 7 disulfides stabilise this stretch: cysteine 18/cysteine 78, cysteine 33/cysteine 125, cysteine 35/cysteine 51, cysteine 50/cysteine 106, cysteine 57/cysteine 99, cysteine 67/cysteine 92, and cysteine 85/cysteine 97. Ca(2+) contacts are provided by tyrosine 34, glycine 36, and glycine 38. Histidine 54 is an active-site residue. A Ca(2+)-binding site is contributed by aspartate 55. Aspartate 100 is a catalytic residue.

Belongs to the phospholipase A2 family. Group I subfamily. D49 sub-subfamily. It depends on Ca(2+) as a cofactor. Expressed by the venom gland.

It localises to the secreted. The enzyme catalyses a 1,2-diacyl-sn-glycero-3-phosphocholine + H2O = a 1-acyl-sn-glycero-3-phosphocholine + a fatty acid + H(+). In terms of biological role, PLA2 catalyzes the calcium-dependent hydrolysis of the 2-acyl groups in 3-sn-phosphoglycerides. In Naja sagittifera (Andaman cobra), this protein is Acidic phospholipase A2 3.